The sequence spans 924 residues: Aminopeptidase 2 (924 aa).

Residues 1 to 45 form the signal peptide; it reads MASNNTSQRSGFSSFFCRLKTYFCNHFLCLFVLSFFPLSFRRLCL. The propeptide occupies 46 to 57; that stretch reads LCHLCEKSNLWL. Residue S58 is modified to N-acetylserine; partial. N92 is a glycosylation site (N-linked (GlcNAc...) asparagine). E194 contributes to the substrate binding site. An N-linked (GlcNAc...) asparagine glycan is attached at N229. 327–331 is a binding site for substrate; that stretch reads GAMEN. H363 provides a ligand contact to Zn(2+). Residue E364 is the Proton acceptor of the active site. H367 and E386 together coordinate Zn(2+).

This sequence belongs to the peptidase M1 family. The cofactor is Zn(2+).

It localises to the secreted. Its subcellular location is the cell wall. With respect to regulation, inactivated by metal-chelating agents phenanthroline and EDTA. Inhibited by bestatin, an aminopeptidase inhibitor. Not inhibited by pepstatin A and PMSF, inhibitors of aspartic and the serine proteases, respectively. Not inhibited by carboxypeptidase inhibitor. Functionally, metalloprotease that specifically hydrolyzes peptides with N-terminal alanine, arginine and leucine residues. In Candida albicans (strain SC5314 / ATCC MYA-2876) (Yeast), this protein is Aminopeptidase 2 (APE2).